The primary structure comprises 344 residues: uncharacterized protein (344 aa).

The signal sequence occupies residues 1–27 (MKKWLIIAVSLAIAIVLFMYTKGEAKA). Residues 29–344 (GMTVGYTTGD…FWKAIRKGTK (316 aa)) form the GH18 domain. Catalysis depends on glutamate 140, which acts as the Proton donor.

The protein belongs to the glycosyl hydrolase 18 family.

This is an uncharacterized protein from Bacillus subtilis (strain 168).